Here is a 4042-residue protein sequence, read N- to C-terminus: Polyketide synthase-nonribosomal peptide synthetase ffsA (4042 aa).

The region spanning 17–453 is the Ketosynthase family 3 (KS3) domain; it reads REPIAIVGSA…GANAHAILEA (437 aa). Catalysis depends on for beta-ketoacyl synthase activity residues Cys190, His330, and His373. The segment at 561–878 is malonyl-CoA:ACP transacylase (MAT) domain; sequence VFTGQGAQWK…TGLLSRGRPD (318 aa). The interval 950–1083 is N-terminal hotdog fold; it reads HEILGTKCPD…GKLKVTLGEP (134 aa). Residues 950–1249 are dehydratase (DH) domain; it reads HEILGTKCPD…LQTKPLANAT (300 aa). Positions 950–1251 constitute a PKS/mFAS DH domain; it reads HEILGTKCPD…TKPLANATAA (302 aa). Catalysis depends on His982, which acts as the Proton acceptor; for dehydratase activity. The segment at 1098–1251 is C-terminal hotdog fold; the sequence is MIDVDSERFY…TKPLANATAA (154 aa). The Proton donor; for dehydratase activity role is filled by Asp1158. The segment at 1390–1613 is methyltransferase (MT) domain; sequence DNLLNDFYVH…VDDHVNFLRD (224 aa). A ketoreductase (KR)domain region spans residues 2116-2289; the sequence is TYWLVGLSGG…AGSAINIGTI (174 aa). A Carrier 1 domain is found at 2399–2476; that stretch reads EAREIIEESL…EMVAAAQEKL (78 aa). Ser2436 carries the post-translational modification O-(pantetheine 4'-phosphoryl)serine. Residues 2515-2601 form a disordered region; the sequence is EKAEYADFDD…FDSDSDNASI (87 aa). Residues 2520 to 2532 are compositionally biased toward acidic residues; it reads ADFDDENEEEGIP. The tract at residues 2629 to 3061 is condensation; it reads RTLPMSFGQT…ISRPSLYDPQ (433 aa). Residues 3089 to 3486 are adenylation; the sequence is EIVKAHGSKV…EDGHLVLEGR (398 aa). In terms of domain architecture, Carrier 2 spans 3607–3684; sequence RDSTEKLKDI…AMARMVDPTA (78 aa). At Ser3644 the chain carries O-(pantetheine 4'-phosphoryl)serine. Positions 3750-3971 are reductase-like domain; sequence ITGATGFLGK…DFVDVEKVAT (222 aa).

The protein in the C-terminal section; belongs to the NRP synthetase family.

It participates in mycotoxin biosynthesis. In terms of biological role, hybrid PKS-NRPS synthetase; part of the gene cluster that mediates the biosynthesis of the cytotoxic leucine-containing cytochalasans, including aspochalasin C, aspochalasin E, TMC-169, flavichalasine F, aspergillin PZ, aspochalasin M and flavichalasine G. The first step in the pathway is catalyzed by the hybrid PKS-NRPS ffsA that utilizes 8 units of malonyl-CoA to iteratively assemble the octaketide chain before addition of L-leucine by the C-terminal NRPS modules. Because ffsA lacks a designated enoylreductase (ER) domain, the required activity is provided the enoyl reductase fssC. The methyltransferase (MT) domain of ffsA catalyzes the alpha-methylation at C10 and C14 using S-adenosyl-L-methionine as the methyl-donating cosubstrate. Reduction by the hydrolyase ffsE, followed by dehydration and intra-molecular Diels-Alder cyclization by the Diels-Alderase ffsF then yield the required isoindolone-fused macrocycle. A number of oxidative steps catalyzed by the tailoring cytochrome P450 monooxygenase ffsD, the FAD-linked oxidoreductase ffsJ and the short-chain dehydrogenase/reductase ffsI, are further required to afford the final products. This is Polyketide synthase-nonribosomal peptide synthetase ffsA from Aspergillus flavipes.